Reading from the N-terminus, the 129-residue chain is Histone H2A.J (129 aa).

Positions 1 to 22 are disordered; that stretch reads MSGRGKQGGKVRAKAKSRSSRA. N6-acetyllysine occurs at positions 6 and 10. The segment covering 7-19 has biased composition (basic residues); it reads QGGKVRAKAKSRS. Position 10 is an N6-lactoyllysine; alternate (lysine 10). Glutamine 105 carries the N5-methylglutamine modification. Threonine 121 carries the post-translational modification Phosphothreonine; by DCAF1.

It belongs to the histone H2A family. In terms of assembly, the nucleosome is a histone octamer containing two molecules each of H2A, H2B, H3 and H4 assembled in one H3-H4 heterotetramer and two H2A-H2B heterodimers. The octamer wraps approximately 147 bp of DNA. Monoubiquitination of Lys-120 (H2AXK119ub) gives a specific tag for epigenetic transcriptional repression. Following DNA double-strand breaks (DSBs), it is ubiquitinated through 'Lys-63' linkage of ubiquitin moieties. Post-translationally, glutamine methylation at Gln-105 (H2AQ104me) by FBL is specifically dedicated to polymerase I. It is present at 35S ribosomal DNA locus and impairs binding of the FACT complex. In terms of processing, phosphorylation on Ser-2 (H2AS1ph) is enhanced during mitosis. Phosphorylation on Ser-2 by RPS6KA5/MSK1 directly represses transcription. Acetylation of H3 inhibits Ser-2 phosphorylation by RPS6KA5/MSK1. Phosphorylation at Thr-121 (H2AT120ph) by DCAF1 is present in the regulatory region of many tumor suppresor genes and down-regulates their transcription.

Its subcellular location is the nucleus. The protein resides in the chromosome. Its function is as follows. Core component of nucleosome. Nucleosomes wrap and compact DNA into chromatin, limiting DNA accessibility to the cellular machineries which require DNA as a template. Histones thereby play a central role in transcription regulation, DNA repair, DNA replication and chromosomal stability. DNA accessibility is regulated via a complex set of post-translational modifications of histones, also called histone code, and nucleosome remodeling. The chain is Histone H2A.J from Mus musculus (Mouse).